The sequence spans 348 residues: uncharacterized protein (348 aa).

6 WD repeats span residues 59–98 (GFQG…VVYS), 142–182 (GHTD…LIQT), 185–226 (DNLG…LLGT), 229–267 (QQPG…ELFS), 270–309 (GPSL…QVTT), and 312–347 (GHQG…SALA).

This is an uncharacterized protein from Synechocystis sp. (strain ATCC 27184 / PCC 6803 / Kazusa).